A 353-amino-acid polypeptide reads, in one-letter code: Feruloyl esterase B (353 aa).

A signal peptide spans 1 to 18; sequence MAIPLVLVLAWLLPVVLA. The tract at residues 19–291 is catalytic; the sequence is ASLTQVNNFG…VSVVLDWFGI (273 aa). The Charge relay system role is filled by S136. Residues N179 and N246 are each glycosylated (N-linked (GlcNAc...) asparagine). A CBM1 domain is found at 317-353; it reads CTAAHWAQCGGIGYSGCTACASPYTCQKANDYYSQCL.

This sequence belongs to the carbohydrate esterase 1 (CE1) family. Feruloyl esterase type B subfamily. In terms of processing, glycosylated.

Its subcellular location is the secreted. The enzyme catalyses feruloyl-polysaccharide + H2O = ferulate + polysaccharide.. Its activity is regulated as follows. Inhibited by the specific serine esterase inhibitor AEBSF. Involved in degradation of plant cell walls. Hydrolyzes the feruloyl-arabinose ester bond in arabinoxylans, and the feruloyl-galactose and feruloyl-arabinose ester bonds in pectin. Binds strongly to cellulose. This chain is Feruloyl esterase B (FAEB), found in Talaromyces funiculosus (Fruitlet core rot fungus).